The chain runs to 277 residues: Tetrahydroxynaphthalene reductase PfmaG (277 aa).

3 residues coordinate NADP(+): Ile36, Asp82, and Asn109. Catalysis depends on proton donor residues Ser158, Ser159, and Tyr173. Positions 173, 177, 206, and 208 each coordinate NADP(+). Residue Lys177 is the Lowers pKa of active site Tyr of the active site.

Belongs to the short-chain dehydrogenases/reductases (SDR) family.

It carries out the reaction scytalone + NADP(+) = naphthalene-1,3,6,8-tetrol + NADPH + H(+). It participates in pigment biosynthesis; melanin biosynthesis. Functionally, tetrahydroxynaphthalene reductase; part of the gene cluster that mediates the biosynthesis of dihydroxynaphthalene (DHN)-melanin, a bluish-green pigment forming a dark layer in the conidial wall that protects the conidia from UV radiations. The first step of the pathway is the production of the pentaketide 1,3,6,8-tetrahydroxynaphthalene (1,3,6,8-THN or T4HN) by the polyketide synthase PfmaE though condensation of acetyl-CoA with malonyl-CoA. T4HN is not stable and easily oxidizes into the stable form flaviolin. T4HN is also substrate of the hydroxynaphthalene reductase PfmaG to yield scytalone. The scytalone dehydratase PfmaJ then reduces scytalone to 1,3,8-THN. 1,3,8-THN is then substrate of the hydroxynaphthalene reductase PfmaI to yield vermelone. Vermelone is further converted by the multicopper oxidase PfmaD to 1,8-DHN. Finally the laccase PFICI_06862 transforms 1,8-DHN to DHN-melanin. The roles of the 5-oxoprolinase PfmaA and the proline iminopeptidase PfmaB within the cluster have not been elucidated yet. This Pestalotiopsis fici (strain W106-1 / CGMCC3.15140) protein is Tetrahydroxynaphthalene reductase PfmaG.